The chain runs to 318 residues: Protein-L-histidine N-pros-methyltransferase (318 aa).

The N-terminal stretch at 1–18 (MRLLAGWLCLSLASVWLA) is a signal peptide. N35 is a glycosylation site (N-linked (GlcNAc...) asparagine). S-adenosyl-L-homocysteine contacts are provided by E174, N210, and Y295.

This sequence belongs to the METTL9 family.

The protein localises to the endoplasmic reticulum. Its subcellular location is the mitochondrion. The enzyme catalyses L-histidyl-[protein] + S-adenosyl-L-methionine = N(pros)-methyl-L-histidyl-[protein] + S-adenosyl-L-homocysteine + H(+). Protein-histidine N-methyltransferase that specifically catalyzes 1-methylhistidine (pros-methylhistidine) methylation of target proteins. Specifically methylates the second His of proteins with a His-x-His (HxH) motif (where 'x' is preferably a small amino acid), while exploiting the first one as a recognition signature. Catalyzes methylation of target proteins such as S100A9, NDUFB3, SLC39A5, SLC39A7, ARMC6 and DNAJB12; 1-methylhistidine modification may affect the binding of zinc and other metals to its target proteins. Constitutes the main methyltransferase for the 1-methylhistidine modification in cell. This is Protein-L-histidine N-pros-methyltransferase from Bos taurus (Bovine).